Consider the following 181-residue polypeptide: ABC transporter E family member 3 (181 aa).

Residues 20–176 (SQIIVMLGEN…KAAFARFHNG (157 aa)) enclose the ABC transporter domain. 27–34 (GENGTGKT) provides a ligand contact to ATP.

It belongs to the ABC transporter superfamily. ABCE family. As to expression, mostly expressed in roots and leaves, and, to a lower extent, in stems, flowers and siliques.

This Arabidopsis thaliana (Mouse-ear cress) protein is ABC transporter E family member 3 (ABCE3).